Consider the following 179-residue polypeptide: SADVAGAVIDGAGLGFDVLKTVLEALGNVKRKIAVGIDNESGRTWTAMNTYFRSGTSDIVLPHKVAHGKALLYNGQKNRGPVATGVVGVIAYSMSDGNTLAVLFSVPYDYNWYSNWWNVRVYKGQKRANQRMYEELYYHRSPFRGDNGWHSRSLGYGLKSRGFMNSSGHAILEIHVTKA.

The segment at 1-29 (SADVAGAVIDGAGLGFDVLKTVLEALGNV) is N-terminal alpha-helix that contributes to the pore. The N-terminal region stretch occupies residues 11–30 (GAGLGFDVLKTVLEALGNVK). Arg31 provides a ligand contact to an N-(acyl)-sphingosylphosphocholine. N-acetyl-D-glucosamine 6-sulfate is bound by residues Tyr51 and Arg53. An N-(acyl)-sphingosylphosphocholine-binding residues include Arg53, Ser54, Arg79, Gly85, Tyr108, Tyr113, Ser114, Trp116, Tyr133, Tyr137, Tyr138, Arg144, and Gly168. Residues 105 to 120 (SVPYDYNWYSNWWNVR) form a trp-rich region, which is important for the binding to lipid membrane region. Residue Tyr138 participates in N-acetyl-D-glucosamine 6-sulfate binding. The Cell attachment site, crucial for protein stability signature appears at 144–146 (RGD).

The protein belongs to the actinoporin family. Sea anemone subfamily. Octamer or nonamer in membranes. Monomer in the soluble state.

The protein resides in the secreted. The protein localises to the nematocyst. It is found in the target cell membrane. In terms of biological role, pore-forming toxin (PFT) that consists of a crown-shaped octamer or nonamer that forms cation-selective hydrophilic pores of about 1.5 nm (inside) and 13 nm (outside) and causes cytolysis. It causes cardiac stimulation. Also causes hemolysis (HC(50)=1.6 nM). Interestingly, the Phe-16 is crucial for hemolysis. Pore formation is a multi-step process that involves specific recognition of membrane sphingomyelin (but neither cholesterol nor phosphatidylcholine) using aromatic rich region and adjacent phosphocholine (POC) binding site, firm binding to the membrane (mainly driven by hydrophobic interactions) accompanied by the transfer of the N-terminal region to the lipid-water interface and finally pore formation after oligomerization of monomers. It is probable that a dimeric form is an assembly intermediate before the complete oligomerization. The formation of stable pores occurs only in vesicles composed of DOPC/SM (there is no oligomerization when the PFT is treated with vesicles of DOPC or SM alone). The transmembrane pore displays 8 lateral perforations, one at each subunit-subunit interface, partially occupied by the acyl-chain region of a bridging lipid. Each pore contains 24 lipid molecules, firmly bound to each subunit, that is, 3 lipids (L1, L2, L3, L4 and/or L5) are associated to each subunit. Lipid L1 bridges 2 subunits, whereas lipids L2 and L3 bind to sites at single subunit. This chain is DELTA-actitoxin-Afr1e, found in Actinia fragacea (Strawberry anemone).